We begin with the raw amino-acid sequence, 194 residues long: Imidazoleglycerol-phosphate dehydratase (194 aa).

The protein belongs to the imidazoleglycerol-phosphate dehydratase family.

The protein localises to the cytoplasm. The catalysed reaction is D-erythro-1-(imidazol-4-yl)glycerol 3-phosphate = 3-(imidazol-4-yl)-2-oxopropyl phosphate + H2O. It functions in the pathway amino-acid biosynthesis; L-histidine biosynthesis; L-histidine from 5-phospho-alpha-D-ribose 1-diphosphate: step 6/9. This is Imidazoleglycerol-phosphate dehydratase from Streptococcus mutans serotype c (strain ATCC 700610 / UA159).